The primary structure comprises 689 residues: Glycine--tRNA ligase beta subunit (689 aa).

It belongs to the class-II aminoacyl-tRNA synthetase family. Tetramer of two alpha and two beta subunits.

The protein localises to the cytoplasm. The catalysed reaction is tRNA(Gly) + glycine + ATP = glycyl-tRNA(Gly) + AMP + diphosphate. The polypeptide is Glycine--tRNA ligase beta subunit (Escherichia coli (strain K12 / MC4100 / BW2952)).